Reading from the N-terminus, the 411-residue chain is Dual-specificity RNA methyltransferase RlmN (411 aa).

E125 serves as the catalytic Proton acceptor. The region spanning 131 to 380 is the Radical SAM core domain; sequence EEGRGTLCIS…IRTPRGRDIL (250 aa). C138 and C383 form a disulfide bridge. C145, C149, and C152 together coordinate [4Fe-4S] cluster. S-adenosyl-L-methionine is bound by residues 209–210, S241, 263–265, and N340; these read GE and SLH. C383 (S-methylcysteine intermediate) is an active-site residue.

Belongs to the radical SAM superfamily. RlmN family. The cofactor is [4Fe-4S] cluster.

Its subcellular location is the cytoplasm. The catalysed reaction is adenosine(2503) in 23S rRNA + 2 reduced [2Fe-2S]-[ferredoxin] + 2 S-adenosyl-L-methionine = 2-methyladenosine(2503) in 23S rRNA + 5'-deoxyadenosine + L-methionine + 2 oxidized [2Fe-2S]-[ferredoxin] + S-adenosyl-L-homocysteine. It carries out the reaction adenosine(37) in tRNA + 2 reduced [2Fe-2S]-[ferredoxin] + 2 S-adenosyl-L-methionine = 2-methyladenosine(37) in tRNA + 5'-deoxyadenosine + L-methionine + 2 oxidized [2Fe-2S]-[ferredoxin] + S-adenosyl-L-homocysteine. Specifically methylates position 2 of adenine 2503 in 23S rRNA and position 2 of adenine 37 in tRNAs. m2A2503 modification seems to play a crucial role in the proofreading step occurring at the peptidyl transferase center and thus would serve to optimize ribosomal fidelity. This is Dual-specificity RNA methyltransferase RlmN from Brucella melitensis biotype 2 (strain ATCC 23457).